The chain runs to 654 residues: Pentatricopeptide repeat-containing protein At4g19191, mitochondrial (654 aa).

Residues 1–65 (MSLIHRRLYR…PFVAKACARL (65 aa)) constitute a mitochondrion transit peptide. 13 PPR repeats span residues 86–116 (DVFV…MPER), 117–151 (DATT…EITP), 152–186 (DSVT…GVDV), 187–217 (QVTV…IDRG), 220–254 (TVVS…EFKP), 255–289 (DLST…GTDQ), 290–320 (DIEA…MTSR), 321–355 (TCVS…GEKP), 356–390 (DLVT…GCKR), 392–422 (NVMI…TPEK), 423–457 (TVVT…DYKP), 458–488 (NHIT…MKQV), and 494–524 (GLDH…MSAK). The tract at residues 529–604 (IWGALLNACK…YPGESVIQVN (76 aa)) is type E motif. The interval 605 to 635 (GKNHSFTVGEHGHVENEVIYFTLNGLSLFAK) is type E(+) motif.

Belongs to the PPR family. PCMP-E subfamily.

The protein resides in the mitochondrion. The sequence is that of Pentatricopeptide repeat-containing protein At4g19191, mitochondrial (PCMP-E1) from Arabidopsis thaliana (Mouse-ear cress).